A 78-amino-acid chain; its full sequence is Antimicrobial peptide marcin-18 (78 aa).

The N-terminal stretch at 1–23 (MQFKKQLMVIFLAYFLVVNESEA) is a signal peptide. Residue Arg-41 is modified to Arginine amide. The propeptide occupies 42–78 (RKNQRSRSIMKRDLENLFDPYQRNLELDRLLKQLPNY).

Belongs to the non-disulfide-bridged peptide (NDBP) superfamily. Medium-length antimicrobial peptide (group 3) family. As to expression, expressed by the venom gland.

The protein resides in the secreted. It localises to the target cell membrane. In terms of biological role, antimicrobial peptide with potent activity against bacteria. Acts by fastly disrupting the bacterial membrane. Shows activity against Gram-positive bacteria S.aureus (MIC=1.5-2.9 uM) and S.epidermidis (MIC=2.9 uM), M.luteus (MIC=23.4 uM), B.thuringiensis (MIC=2.9 uM), B.subtilis (MIC=2.9 uM) and Gram-negative bacteria E.coli (MIC=5.9-11.7 uM) and P.aeruginosa (MIC=5.9 uM), as well as against penicillin (MIC=2.9 uM) and methicillin (MIC=1.5-2.9 uM) resistant bacteria. Antibiotic activity is not affected by major negatively charged components of the prokaryotic cell wall (e.g. lipopolysaccharides and lipoteichoic acid). In vivo, in a mouse model of lethal peritonitis, shows potent antibiotic activity without cytotoxicity, improving the survival rate. The sequence is that of Antimicrobial peptide marcin-18 from Olivierus martensii (Manchurian scorpion).